The primary structure comprises 153 residues: Putative pre-16S rRNA nuclease (153 aa).

It belongs to the YqgF nuclease family.

It localises to the cytoplasm. Functionally, could be a nuclease involved in processing of the 5'-end of pre-16S rRNA. In Prochlorococcus marinus (strain MIT 9301), this protein is Putative pre-16S rRNA nuclease.